A 243-amino-acid chain; its full sequence is DNA repair protein RecO (243 aa).

This sequence belongs to the RecO family.

Functionally, involved in DNA repair and RecF pathway recombination. The sequence is that of DNA repair protein RecO from Hyphomonas neptunium (strain ATCC 15444).